The chain runs to 189 residues: ATP synthase subunit delta (189 aa).

This sequence belongs to the ATPase delta chain family. As to quaternary structure, F-type ATPases have 2 components, F(1) - the catalytic core - and F(0) - the membrane proton channel. F(1) has five subunits: alpha(3), beta(3), gamma(1), delta(1), epsilon(1). F(0) has three main subunits: a(1), b(2) and c(10-14). The alpha and beta chains form an alternating ring which encloses part of the gamma chain. F(1) is attached to F(0) by a central stalk formed by the gamma and epsilon chains, while a peripheral stalk is formed by the delta and b chains.

The protein localises to the cell inner membrane. In terms of biological role, f(1)F(0) ATP synthase produces ATP from ADP in the presence of a proton or sodium gradient. F-type ATPases consist of two structural domains, F(1) containing the extramembraneous catalytic core and F(0) containing the membrane proton channel, linked together by a central stalk and a peripheral stalk. During catalysis, ATP synthesis in the catalytic domain of F(1) is coupled via a rotary mechanism of the central stalk subunits to proton translocation. Its function is as follows. This protein is part of the stalk that links CF(0) to CF(1). It either transmits conformational changes from CF(0) to CF(1) or is implicated in proton conduction. This chain is ATP synthase subunit delta, found in Methylorubrum extorquens (strain PA1) (Methylobacterium extorquens).